The following is a 456-amino-acid chain: Exodeoxyribonuclease 7 large subunit (456 aa).

It belongs to the XseA family. As to quaternary structure, heterooligomer composed of large and small subunits.

The protein resides in the cytoplasm. The enzyme catalyses Exonucleolytic cleavage in either 5'- to 3'- or 3'- to 5'-direction to yield nucleoside 5'-phosphates.. Bidirectionally degrades single-stranded DNA into large acid-insoluble oligonucleotides, which are then degraded further into small acid-soluble oligonucleotides. The protein is Exodeoxyribonuclease 7 large subunit of Shigella dysenteriae serotype 1 (strain Sd197).